A 446-amino-acid chain; its full sequence is Histidine--tRNA ligase (446 aa).

The protein belongs to the class-II aminoacyl-tRNA synthetase family. Homodimer.

The protein resides in the cytoplasm. It catalyses the reaction tRNA(His) + L-histidine + ATP = L-histidyl-tRNA(His) + AMP + diphosphate + H(+). This is Histidine--tRNA ligase from Paraburkholderia xenovorans (strain LB400).